The following is a 260-amino-acid chain: Snake venom serine proteinase 12 (260 aa).

Residues 1–18 (MVLIRVLANLLILQLSYA) form the signal peptide. The propeptide occupies 19 to 24 (QKSSEL). A Peptidase S1 domain is found at 25-251 (VIGGDECNIN…HLDWIQSIIA (227 aa)). 6 cysteine pairs are disulfide-bonded: Cys-31-Cys-163, Cys-50-Cys-66, Cys-98-Cys-258, Cys-142-Cys-212, Cys-174-Cys-191, and Cys-202-Cys-227. His-65 (charge relay system) is an active-site residue. Asn-103 is a glycosylation site (N-linked (GlcNAc...) asparagine). Catalysis depends on Asp-110, which acts as the Charge relay system. The active-site Charge relay system is Ser-206.

It belongs to the peptidase S1 family. Snake venom subfamily. As to quaternary structure, monomer. In terms of tissue distribution, expressed by the venom gland.

It localises to the secreted. Its function is as follows. Snake venom serine protease that may act in the hemostasis system of the prey. This chain is Snake venom serine proteinase 12, found in Crotalus adamanteus (Eastern diamondback rattlesnake).